Here is a 78-residue protein sequence, read N- to C-terminus: Large ribosomal subunit protein bL28 (78 aa).

Residues 1 to 21 (MSRVCQLSGKRANNGMAVSHS) form a disordered region.

The protein belongs to the bacterial ribosomal protein bL28 family.

The protein is Large ribosomal subunit protein bL28 of Synechococcus sp. (strain RCC307).